A 364-amino-acid chain; its full sequence is 3-isopropylmalate dehydrogenase (364 aa).

NAD(+) is bound at residue 79-92 (GPKWEHLPPDQQPE). Arg-100, Arg-110, Arg-139, and Asp-228 together coordinate substrate. Residues Asp-228, Asp-252, and Asp-256 each contribute to the Mg(2+) site. 286 to 298 (GSAPDIAGKNIAN) contacts NAD(+).

It belongs to the isocitrate and isopropylmalate dehydrogenases family. LeuB type 1 subfamily. In terms of assembly, homodimer. It depends on Mg(2+) as a cofactor. Mn(2+) is required as a cofactor.

It is found in the cytoplasm. The enzyme catalyses (2R,3S)-3-isopropylmalate + NAD(+) = 4-methyl-2-oxopentanoate + CO2 + NADH. It functions in the pathway amino-acid biosynthesis; L-leucine biosynthesis; L-leucine from 3-methyl-2-oxobutanoate: step 3/4. Functionally, catalyzes the oxidation of 3-carboxy-2-hydroxy-4-methylpentanoate (3-isopropylmalate) to 3-carboxy-4-methyl-2-oxopentanoate. The product decarboxylates to 4-methyl-2 oxopentanoate. The chain is 3-isopropylmalate dehydrogenase from Escherichia coli (strain UTI89 / UPEC).